The sequence spans 197 residues: Nucleoside triphosphate pyrophosphatase (197 aa).

Catalysis depends on Asp-71, which acts as the Proton acceptor.

The protein belongs to the Maf family. A divalent metal cation is required as a cofactor.

It localises to the cytoplasm. It carries out the reaction a ribonucleoside 5'-triphosphate + H2O = a ribonucleoside 5'-phosphate + diphosphate + H(+). The catalysed reaction is a 2'-deoxyribonucleoside 5'-triphosphate + H2O = a 2'-deoxyribonucleoside 5'-phosphate + diphosphate + H(+). Nucleoside triphosphate pyrophosphatase. May have a dual role in cell division arrest and in preventing the incorporation of modified nucleotides into cellular nucleic acids. This Trichormus variabilis (strain ATCC 29413 / PCC 7937) (Anabaena variabilis) protein is Nucleoside triphosphate pyrophosphatase.